The primary structure comprises 276 residues: Large ribosomal subunit protein uL2 (276 aa).

Disordered stretches follow at residues M1 to T50 and G206 to R276. Positions R7–V19 are enriched in polar residues. Positions S20–K38 are enriched in basic and acidic residues.

Belongs to the universal ribosomal protein uL2 family. As to quaternary structure, part of the 50S ribosomal subunit. Forms a bridge to the 30S subunit in the 70S ribosome.

Its function is as follows. One of the primary rRNA binding proteins. Required for association of the 30S and 50S subunits to form the 70S ribosome, for tRNA binding and peptide bond formation. It has been suggested to have peptidyltransferase activity; this is somewhat controversial. Makes several contacts with the 16S rRNA in the 70S ribosome. In Solibacter usitatus (strain Ellin6076), this protein is Large ribosomal subunit protein uL2.